The following is an 886-amino-acid chain: Semaphorin-6B (886 aa).

The N-terminal stretch at 1 to 26 (MWTPRVPPPRPALSFFLLLLLGVTYG) is a signal peptide. Residues 27–605 (LFPEEPPPLS…VSVNLLVTSS (579 aa)) are Extracellular-facing. The 494-residue stretch at 32–525 (PPPLSVAPRD…FPRCVVRVPV (494 aa)) folds into the Sema domain. Asparagine 75 is a glycosylation site (N-linked (GlcNAc...) asparagine). Intrachain disulfides connect cysteine 117/cysteine 127 and cysteine 145/cysteine 154. 2 N-linked (GlcNAc...) asparagine glycosylation sites follow: asparagine 156 and asparagine 292. Cystine bridges form between cysteine 268/cysteine 379 and cysteine 293/cysteine 338. Residues asparagine 387, asparagine 442, and asparagine 463 are each glycosylated (N-linked (GlcNAc...) asparagine). Cystine bridges form between cysteine 487-cysteine 519, cysteine 528-cysteine 546, cysteine 534-cysteine 580, and cysteine 538-cysteine 554. The chain crosses the membrane as a helical span at residues 606–626 (VAAFVVGAVVSGFSVGWFVGL). Residues 627-886 (RERRELARRK…TGERTAPPVP (260 aa)) lie on the Cytoplasmic side of the membrane. Disordered stretches follow at residues 655–677 (RLGERRGTGPGGRGGAGGGPGGP), 697–731 (HGGPHDLDTGLLPTPEQTPLPQKRLPTPHPHAHAL), and 761–886 (EQPQ…PPVP). The segment covering 662–674 (TGPGGRGGAGGGP) has biased composition (gly residues). The residue at position 667 (arginine 667) is an Omega-N-methylarginine. A compositionally biased stretch (low complexity) spans 707 to 718 (LLPTPEQTPLPQ).

This sequence belongs to the semaphorin family. In terms of assembly, homodimer. Binds specifically the SH3 domain of the protooncogene C-SRC. In adulthood, it is expressed ubiquitously.

It localises to the cell membrane. Functionally, functions as a cell surface repellent for mossy fibers of developing neurons in the hippocampus where it plays a role in axon guidance. May function through the PLXNA4 receptor expressed by mossy cell axons. The sequence is that of Semaphorin-6B (Sema6b) from Mus musculus (Mouse).